The sequence spans 242 residues: Glutamate transport ATP-binding protein GluA (242 aa).

Residues 2-236 (IKMTGVQKFF…PQTDRAKDFL (235 aa)) form the ABC transporter domain. 34 to 41 (GPSGSGKS) lines the ATP pocket.

It belongs to the ABC transporter superfamily. In terms of assembly, the complex is composed of two ATP-binding proteins (GluA), two transmembrane proteins (GluC and GluD) and a solute-binding protein (GluB).

It is found in the cell membrane. The catalysed reaction is a polar amino acid(out) + ATP + H2O = a polar amino acid(in) + ADP + phosphate + H(+). It carries out the reaction L-glutamate(out) + ATP + H2O = L-glutamate(in) + ADP + phosphate + H(+). In terms of biological role, part of the ABC transporter complex GluABCD involved in glutamate uptake. Probably responsible for energy coupling to the transport system. This is Glutamate transport ATP-binding protein GluA from Corynebacterium efficiens (strain DSM 44549 / YS-314 / AJ 12310 / JCM 11189 / NBRC 100395).